The following is a 386-amino-acid chain: Phosphoglycerate kinase (386 aa).

Residues 21–23 (DLN), R36, 59–62 (HLGR), R112, and R145 contribute to the substrate site. ATP is bound by residues K196, E313, and 339–342 (GGDT).

It belongs to the phosphoglycerate kinase family. Monomer.

It is found in the cytoplasm. It catalyses the reaction (2R)-3-phosphoglycerate + ATP = (2R)-3-phospho-glyceroyl phosphate + ADP. Its pathway is carbohydrate degradation; glycolysis; pyruvate from D-glyceraldehyde 3-phosphate: step 2/5. The protein is Phosphoglycerate kinase of Haemophilus influenzae (strain 86-028NP).